A 433-amino-acid chain; its full sequence is MDAPLTDAERTALQTSLEALNRQVEATRNILRSNSQKALLQTLHTDQELPDPALEALAGKTINLLHETQQLLEPGHLVLADHFLGYVSTKCLCAAVELKLVDILADADEAGMTVDELADASGAHPDRLQQVLRVLRNDNIFDYDAVSHRYRNNRVSALLHSEHWTQWHNWVDLYGNEFYDIARGIPRSIRREEARWAAQINFDTNDDMFTYFQAQGWLPRLHRTLGGGAIAQAPGIVADYPWHEIGSRTVLDVGGGGGGFLASLLREYPQMRGGILDLPRTIEHACTLFHEPQGPYFDLRERVPRENLIAGDFLKAVPAFEIYTMKWVLHDWKDPDVLTILRCIRASLIPGPDSRLVILESNLSDGQMGRLSRYGDINMMMTANGQERSEEQWRALAAASGWEVSRIYPMRRAWVCAIDLRPSASESGDRKHS.

A coiled-coil region spans residues 5–37 (LTDAERTALQTSLEALNRQVEATRNILRSNSQK). S-adenosyl-L-methionine-binding positions include Asp277 and 311-313 (GDF). Catalysis depends on His330, which acts as the Proton acceptor.

Belongs to the class I-like SAM-binding methyltransferase superfamily. Cation-independent O-methyltransferase family. COMT subfamily.

Its pathway is mycotoxin biosynthesis. O-methyltransferase; part of the gene cluster that mediates the biosynthesis of aspirochlorine (or antibiotic A30641), an unusual halogenated spiro compound with distinctive antifungal properties due to selective inhibition of protein biosynthesis, and which is also active against bacteria, viruses, and murine tumor cells. The non-ribosomal peptide synthetase (NRPS) aclP is responsible the formation of the diketopiperazine (DKP) core from the condensation of 2 phenylalanine residues. One Phe residue is tailored into chlorotyrosine by hydroxylation and chlorination, whereas the second Phe undergoes an unprecedented C-C bond cleavage to be converted into glycine. After formation of the DKP, sulfur is incorporated into the DKP by conjugation with glutathione by aclG, followed by its stepwise degradation to the thiol by aclI, aclJ and aclK, and the dithiol oxidation by aclT. In addition, oxygenases (aclB, aclC, aclL and aclO) and O-methyltransferases (aclM and aclU) act as tailoring enzymes to produce the intermediate dechloroaspirochlorine. Ultimately, chlorination of dechloroaspirochlorine by the halogenase aclH is the last step in the aspirochlorine pathway. This is O-methyltransferase aclM from Aspergillus oryzae (strain ATCC 42149 / RIB 40) (Yellow koji mold).